Consider the following 92-residue polypeptide: Small ribosomal subunit protein uS19c (92 aa).

Belongs to the universal ribosomal protein uS19 family.

The protein resides in the plastid. It is found in the chloroplast. Functionally, protein S19 forms a complex with S13 that binds strongly to the 16S ribosomal RNA. The sequence is that of Small ribosomal subunit protein uS19c from Ceratophyllum demersum (Rigid hornwort).